Consider the following 193-residue polypeptide: Segregation and condensation protein B (193 aa).

Belongs to the ScpB family. As to quaternary structure, homodimer. Homodimerization may be required to stabilize the binding of ScpA to the Smc head domains. Component of a cohesin-like complex composed of ScpA, ScpB and the Smc homodimer, in which ScpA and ScpB bind to the head domain of Smc. The presence of the three proteins is required for the association of the complex with DNA.

Its subcellular location is the cytoplasm. Its function is as follows. Participates in chromosomal partition during cell division. May act via the formation of a condensin-like complex containing Smc and ScpA that pull DNA away from mid-cell into both cell halves. The polypeptide is Segregation and condensation protein B (Shouchella clausii (strain KSM-K16) (Alkalihalobacillus clausii)).